We begin with the raw amino-acid sequence, 144 residues long: MSEQIKKRTFKKFTYSGVALESLLDLKEEQLISLLRCRARRKLRRETPIKHVNFLKKCRASKAAVTQVGEKPALVKTHARNILIVPEMIGSVIGIYNGKVFNQVEVKPEMIGHYTGEFSLSYKSVNHGRPGIGATHSSRFIPLK.

This sequence belongs to the universal ribosomal protein uS19 family.

This is Small ribosomal subunit protein uS19 (rps15) from Dictyostelium discoideum (Social amoeba).